Reading from the N-terminus, the 464-residue chain is E3 ubiquitin-protein ligase ITT1 (464 aa).

Residues 176 to 455 (SNYHCCICME…EAYSGCYGRL (280 aa)) are TRIAD supradomain. Zn(2+) contacts are provided by Cys-180, Cys-183, Cys-207, Cys-210, Cys-290, Cys-300, Cys-316, Cys-319, Cys-402, and Cys-405. The RING-type 1 zinc-finger motif lies at 180 to 236 (CCICMEMEKGVRMIKLPCENANVEHYLCRGCAKSYFTAMIQENRISSVRCPQCEYKE). An IBR-type zinc finger spans residues 267-338 (DTELCERYEK…HAWHGYNNKC (72 aa)). An RING-type 2; atypical zinc finger spans residues 402 to 431 (CPKCKVVVERSEGCNKMKCEVCGTLFCFIC). Cys-415 is an active-site residue. The Zn(2+) site is built by Cys-420, Cys-423, Cys-428, Cys-431, His-443, and Cys-451.

Belongs to the RBR family. RNF14 subfamily. In terms of assembly, interacts with translation release factors eRF1 (SUP45) and eRF3 (SUP35) in vitro.

It catalyses the reaction [E2 ubiquitin-conjugating enzyme]-S-ubiquitinyl-L-cysteine + [acceptor protein]-L-lysine = [E2 ubiquitin-conjugating enzyme]-L-cysteine + [acceptor protein]-N(6)-ubiquitinyl-L-lysine.. The protein operates within protein modification; protein ubiquitination. Functionally, E3 ubiquitin-protein ligase involved in translation quality control. Involved in the rescue of stalled ribosomes by promoting ubiquitination and degradation of proteins on stalled ribosomes. Specifically required to resolve RNA-protein cross-links caused by reactive aldehydes, which trigger translation stress by stalling ribosomes: acts by catalying 'Lys-6'-linked ubiquitination of RNA-protein cross-links, leading to their degradation. Interacts with the translation termination factors eRF1 (SUP45) and eRF3 (SUP35); overexpression decreases the efficiency of translation termination. This is E3 ubiquitin-protein ligase ITT1 from Saccharomyces cerevisiae (strain ATCC 204508 / S288c) (Baker's yeast).